We begin with the raw amino-acid sequence, 326 residues long: GMP reductase (326 aa).

Residue C175 is the Thioimidate intermediate of the active site. Residue 204-227 participates in NADP(+) binding; it reads IIADGGIRTHGDIAKSVRFGATMV.

It belongs to the IMPDH/GMPR family. GuaC type 2 subfamily.

The enzyme catalyses IMP + NH4(+) + NADP(+) = GMP + NADPH + 2 H(+). In terms of biological role, catalyzes the irreversible NADPH-dependent deamination of GMP to IMP. It functions in the conversion of nucleobase, nucleoside and nucleotide derivatives of G to A nucleotides, and in maintaining the intracellular balance of A and G nucleotides. This is GMP reductase from Bacillus licheniformis (strain ATCC 14580 / DSM 13 / JCM 2505 / CCUG 7422 / NBRC 12200 / NCIMB 9375 / NCTC 10341 / NRRL NRS-1264 / Gibson 46).